The primary structure comprises 341 residues: S-adenosylmethionine:tRNA ribosyltransferase-isomerase (341 aa).

Belongs to the QueA family. Monomer.

The protein resides in the cytoplasm. The enzyme catalyses 7-aminomethyl-7-carbaguanosine(34) in tRNA + S-adenosyl-L-methionine = epoxyqueuosine(34) in tRNA + adenine + L-methionine + 2 H(+). It participates in tRNA modification; tRNA-queuosine biosynthesis. Transfers and isomerizes the ribose moiety from AdoMet to the 7-aminomethyl group of 7-deazaguanine (preQ1-tRNA) to give epoxyqueuosine (oQ-tRNA). The chain is S-adenosylmethionine:tRNA ribosyltransferase-isomerase from Clostridium perfringens (strain SM101 / Type A).